We begin with the raw amino-acid sequence, 118 residues long: Large ribosomal subunit protein uL18 (118 aa).

It belongs to the universal ribosomal protein uL18 family. Part of the 50S ribosomal subunit; part of the 5S rRNA/L5/L18/L25 subcomplex. Contacts the 5S and 23S rRNAs.

This is one of the proteins that bind and probably mediate the attachment of the 5S RNA into the large ribosomal subunit, where it forms part of the central protuberance. The chain is Large ribosomal subunit protein uL18 from Rhizorhabdus wittichii (strain DSM 6014 / CCUG 31198 / JCM 15750 / NBRC 105917 / EY 4224 / RW1) (Sphingomonas wittichii).